The chain runs to 172 residues: MSSKKAKTKTTKKRPQRATSNVFAMFDQSQIQEFKEAFNMIDQNRDGFIDKEDLHDMLASLGKNPTDAYLDAMMNEAPGPINFTMFLTMFGEKLNGTDPEDVIRNAFACFDEEATGTIQEDYLRELLTTMGDRFTDEEVDELYREAPIDKKGNFNYIEFTRILKHGAKDKDD.

The span at 1–16 (MSSKKAKTKTTKKRPQ) shows a compositional bias: basic residues. Residues 1 to 20 (MSSKKAKTKTTKKRPQRATS) form a disordered region. T19 is modified (phosphothreonine; by MLCK and ZIPK/DAPK3). S20 is subject to Phosphoserine; by MLCK and ZIPK/DAPK3. 3 consecutive EF-hand domains span residues 29-64 (SQIQEFKEAFNMIDQNRDGFIDKEDLHDMLASLGKN), 98-133 (DPEDVIRNAFACFDEEATGTIQEDYLRELLTTMGDR), and 134-169 (FTDEEVDELYREAPIDKKGNFNYIEFTRILKHGAKD). 4 residues coordinate Ca(2+): D42, N44, D46, and D53.

As to quaternary structure, myosin is a hexamer of 2 heavy chains and 4 light chains: interacts with myosin heavy chain MYO19. Phosphorylation increases the actin-activated myosin ATPase activity and thereby regulates the contractile activity. It is required to generate the driving force in the migration of the cells but not necessary for localization of myosin-2 at the leading edge. Phosphorylation is reduced following epigallocatechin-3-O-gallate treatment. Ubiquitously expressed in various hematopoietic cells.

In terms of biological role, myosin regulatory subunit that plays an important role in regulation of both smooth muscle and nonmuscle cell contractile activity via its phosphorylation. Phosphorylation triggers actin polymerization in vascular smooth muscle. Implicated in cytokinesis, receptor capping, and cell locomotion. The protein is Myosin regulatory light chain 12B (MYL12B) of Homo sapiens (Human).